The following is a 161-amino-acid chain: Pathogenesis-related protein 1 (161 aa).

The signal sequence occupies residues 1 to 26 (MNFTGYSRFLIVFVALVGALVLPSKA). The SCP domain maps to 34 to 149 (LRVHNQARGA…NGGTIISCNY (116 aa)). Disulfide bonds link Cys-70–Cys-138, Cys-113–Cys-117, and Cys-133–Cys-147.

The protein belongs to the CRISP family.

It localises to the secreted. The protein localises to the extracellular space. Its subcellular location is the apoplast. In terms of biological role, partially responsible for acquired pathogen resistance. The sequence is that of Pathogenesis-related protein 1 from Arabidopsis thaliana (Mouse-ear cress).